The sequence spans 114 residues: Gamma-glutamylcyclotransferase family protein ytfP (114 aa).

The protein belongs to the gamma-glutamylcyclotransferase family.

The protein resides in the cytoplasm. Its function is as follows. May play a role in antibiotic biosynthesis. The protein is Gamma-glutamylcyclotransferase family protein ytfP (ytfP) of Citrobacter rodentium (strain ICC168) (Citrobacter freundii biotype 4280).